The chain runs to 234 residues: Orotidine 5'-phosphate decarboxylase (234 aa).

Substrate-binding positions include aspartate 10, lysine 31, 58-67, threonine 121, arginine 183, glutamine 192, glycine 212, and arginine 213; that span reads DLKLHDIPNT. Lysine 60 (proton donor) is an active-site residue.

It belongs to the OMP decarboxylase family. Type 1 subfamily. In terms of assembly, homodimer.

The enzyme catalyses orotidine 5'-phosphate + H(+) = UMP + CO2. It participates in pyrimidine metabolism; UMP biosynthesis via de novo pathway; UMP from orotate: step 2/2. In terms of biological role, catalyzes the decarboxylation of orotidine 5'-monophosphate (OMP) to uridine 5'-monophosphate (UMP). The polypeptide is Orotidine 5'-phosphate decarboxylase (Lysinibacillus sphaericus (strain C3-41)).